The following is a 260-amino-acid chain: Tryptophan synthase alpha chain (260 aa).

Active-site proton acceptor residues include glutamate 52 and aspartate 63.

It belongs to the TrpA family. As to quaternary structure, tetramer of two alpha and two beta chains.

The enzyme catalyses (1S,2R)-1-C-(indol-3-yl)glycerol 3-phosphate + L-serine = D-glyceraldehyde 3-phosphate + L-tryptophan + H2O. It functions in the pathway amino-acid biosynthesis; L-tryptophan biosynthesis; L-tryptophan from chorismate: step 5/5. Functionally, the alpha subunit is responsible for the aldol cleavage of indoleglycerol phosphate to indole and glyceraldehyde 3-phosphate. This Streptococcus thermophilus (strain ATCC BAA-491 / LMD-9) protein is Tryptophan synthase alpha chain.